Consider the following 564-residue polypeptide: Dihydropyrimidinase-related protein 5 (564 aa).

2 positions are modified to phosphothreonine: Thr-509 and Thr-514. Ser-532 and Ser-538 each carry phosphoserine. Arg-559 is subject to Omega-N-methylarginine.

Belongs to the metallo-dependent hydrolases superfamily. Hydantoinase/dihydropyrimidinase family. As to quaternary structure, homotetramer, and heterotetramer with other DPYS-like proteins. Interacts with DPYSL2, DPYSL3 and DPYSL4. Interacts with SEPTIN4 isoform 4. Interacts with MAP2 and TUBB3. Detected in brain.

It localises to the cytoplasm. Its function is as follows. Involved in the negative regulation of dendrite outgrowth. In Mus musculus (Mouse), this protein is Dihydropyrimidinase-related protein 5 (Dpysl5).